Here is a 33-residue protein sequence, read N- to C-terminus: Phosphoglycerate kinase (33 aa).

K13 serves as a coordination point for AMP. K13 provides a ligand contact to ATP.

Belongs to the phosphoglycerate kinase family. In terms of assembly, monomer. Requires Mg(2+) as cofactor.

The catalysed reaction is (2R)-3-phosphoglycerate + ATP = (2R)-3-phospho-glyceroyl phosphate + ADP. This Pseudotsuga menziesii (Douglas-fir) protein is Phosphoglycerate kinase.